Reading from the N-terminus, the 28-residue chain is Trypsin inhibitor 4 (28 aa).

Cystine bridges form between C2/C19, C9/C21, and C15/C27.

It belongs to the protease inhibitor I7 (squash-type serine protease inhibitor) family.

The protein localises to the secreted. In terms of biological role, inhibits trypsin. The sequence is that of Trypsin inhibitor 4 from Luffa aegyptiaca (Sponge gourd).